A 64-amino-acid chain; its full sequence is Large ribosomal subunit protein bL35 (64 aa).

2 disordered regions span residues 1–22 and 34–64; these read MPKA…TGKI and EHKP…LLNG. The segment covering 34-46 has biased composition (basic and acidic residues); that stretch reads EHKPTTRTRRLEG. Over residues 50-64 the composition is skewed to polar residues; it reads VSANDTKRVNSLLNG.

This sequence belongs to the bacterial ribosomal protein bL35 family.

In Mycolicibacterium paratuberculosis (strain ATCC BAA-968 / K-10) (Mycobacterium paratuberculosis), this protein is Large ribosomal subunit protein bL35.